Reading from the N-terminus, the 630-residue chain is UvrABC system protein C (630 aa).

In terms of domain architecture, GIY-YIG spans Thr-18–Ile-97. Residues Lys-207 to Ile-242 form the UVR domain.

This sequence belongs to the UvrC family. In terms of assembly, interacts with UvrB in an incision complex.

It localises to the cytoplasm. Its function is as follows. The UvrABC repair system catalyzes the recognition and processing of DNA lesions. UvrC both incises the 5' and 3' sides of the lesion. The N-terminal half is responsible for the 3' incision and the C-terminal half is responsible for the 5' incision. The sequence is that of UvrABC system protein C from Bdellovibrio bacteriovorus (strain ATCC 15356 / DSM 50701 / NCIMB 9529 / HD100).